Here is a 319-residue protein sequence, read N- to C-terminus: Transmembrane protein 121 (319 aa).

The next 7 helical transmembrane spans lie at 10-30 (HVCL…AYLV), 43-63 (IIVL…AVWV), 74-94 (YAMI…YFIF), 112-132 (ALTL…VALD), 150-170 (LFWV…LWEP), 174-194 (GLPL…LLVL), and 214-234 (MMLY…LARA). The span at 277 to 306 (PALSLELQPPPPQRNSVPPPPPPLHGPPGR) shows a compositional bias: pro residues. Positions 277-319 (PALSLELQPPPPQRNSVPPPPPPLHGPPGRPHMSSPTRDPLDT) are disordered.

Belongs to the TMEM121 family. Highly expressed in heart and detected in pancreas, liver and skeletal muscle.

Its subcellular location is the membrane. Its function is as follows. May play a role in MAPK signaling. The sequence is that of Transmembrane protein 121 (TMEM121) from Homo sapiens (Human).